The following is a 355-amino-acid chain: Chorismate synthase (355 aa).

Arginine 46 contacts NADP(+). Residues 123–125 (RAS), 233–234 (NG), glycine 273, 288–292 (KPTPS), and arginine 314 each bind FMN.

The protein belongs to the chorismate synthase family. In terms of assembly, homotetramer. FMNH2 serves as cofactor.

It catalyses the reaction 5-O-(1-carboxyvinyl)-3-phosphoshikimate = chorismate + phosphate. It functions in the pathway metabolic intermediate biosynthesis; chorismate biosynthesis; chorismate from D-erythrose 4-phosphate and phosphoenolpyruvate: step 7/7. Catalyzes the anti-1,4-elimination of the C-3 phosphate and the C-6 proR hydrogen from 5-enolpyruvylshikimate-3-phosphate (EPSP) to yield chorismate, which is the branch point compound that serves as the starting substrate for the three terminal pathways of aromatic amino acid biosynthesis. This reaction introduces a second double bond into the aromatic ring system. The sequence is that of Chorismate synthase from Campylobacter concisus (strain 13826).